Here is a 135-residue protein sequence, read N- to C-terminus: Large ribosomal subunit protein bL17 (135 aa).

It belongs to the bacterial ribosomal protein bL17 family. Part of the 50S ribosomal subunit. Contacts protein L32.

The chain is Large ribosomal subunit protein bL17 from Listeria innocua serovar 6a (strain ATCC BAA-680 / CLIP 11262).